A 463-amino-acid chain; its full sequence is Sporulation-specific protein 22 (463 aa).

The first 25 residues, 1–25 (MNRITRKSCLFAIIFASLFVTHALG), serve as a signal peptide directing secretion. LRR repeat units lie at residues 127-147 (SPEL…LFQL), 185-206 (IEII…NFNK), 207-233 (VQEI…TIRG), 251-275 (LREV…KVKS), and 302-325 (INNV…LMIA). Asn-256, Asn-314, and Asn-327 each carry an N-linked (GlcNAc...) asparagine glycan. A lipid anchor (GPI-anchor amidated asparagine) is attached at Asn-440. Positions 441 to 463 (SANPSMQLDPLLFGTCLVAMLLF) are cleaved as a propeptide — removed in mature form.

Belongs to the SPS2 family.

The protein resides in the cell membrane. Functionally, redundant with SPS2 for the organization of the beta-glucan layer of the spore wall. This Saccharomyces cerevisiae (strain ATCC 204508 / S288c) (Baker's yeast) protein is Sporulation-specific protein 22 (SPS22).